The sequence spans 124 residues: Large ribosomal subunit protein bL36m (124 aa).

Belongs to the bacterial ribosomal protein bL36 family. In terms of assembly, component of the mitochondrial large ribosomal subunit (mt-LSU). Mature N.crassa 74S mitochondrial ribosomes consist of a small (37S) and a large (54S) subunit. The 37S small subunit contains a 16S ribosomal RNA (16S mt-rRNA) and 32 different proteins. The 54S large subunit contains a 23S rRNA (23S mt-rRNA) and 42 different proteins. bL36m has a zinc binding site.

The protein resides in the mitochondrion. Its function is as follows. Component of the mitochondrial ribosome (mitoribosome), a dedicated translation machinery responsible for the synthesis of mitochondrial genome-encoded proteins, including at least some of the essential transmembrane subunits of the mitochondrial respiratory chain. The mitoribosomes are attached to the mitochondrial inner membrane and translation products are cotranslationally integrated into the membrane. The sequence is that of Large ribosomal subunit protein bL36m (rtc6) from Neurospora crassa (strain ATCC 24698 / 74-OR23-1A / CBS 708.71 / DSM 1257 / FGSC 987).